The chain runs to 511 residues: Exodeoxyribonuclease 7 large subunit (511 aa).

Belongs to the XseA family. In terms of assembly, heterooligomer composed of large and small subunits.

The protein resides in the cytoplasm. It carries out the reaction Exonucleolytic cleavage in either 5'- to 3'- or 3'- to 5'-direction to yield nucleoside 5'-phosphates.. Its function is as follows. Bidirectionally degrades single-stranded DNA into large acid-insoluble oligonucleotides, which are then degraded further into small acid-soluble oligonucleotides. The chain is Exodeoxyribonuclease 7 large subunit from Brucella canis (strain ATCC 23365 / NCTC 10854 / RM-666).